The primary structure comprises 550 residues: Glucose-6-phosphate isomerase (550 aa).

Catalysis depends on E355, which acts as the Proton donor. Active-site residues include H386 and K512.

It belongs to the GPI family.

Its subcellular location is the cytoplasm. It catalyses the reaction alpha-D-glucose 6-phosphate = beta-D-fructose 6-phosphate. Its pathway is carbohydrate biosynthesis; gluconeogenesis. It participates in carbohydrate degradation; glycolysis; D-glyceraldehyde 3-phosphate and glycerone phosphate from D-glucose: step 2/4. Functionally, catalyzes the reversible isomerization of glucose-6-phosphate to fructose-6-phosphate. This is Glucose-6-phosphate isomerase from Rhodococcus opacus (strain B4).